The following is a 459-amino-acid chain: ATP-binding protein Uup-like (459 aa).

The 219-residue stretch at 132-350 (FEMEDVSYEI…QQANFWASKA (219 aa)) folds into the ABC transporter domain. Position 164–171 (164–171 (GPNGCGKT)) interacts with ATP. Basic and acidic residues predominate over residues 357–375 (AKKSEPLKEESAVKNDRTS). The interval 357-381 (AKKSEPLKEESAVKNDRTSKPKSVK) is disordered.

Belongs to the ABC transporter superfamily. ABCF family. Uup subfamily.

The protein resides in the cytoplasm. It carries out the reaction ATP + H2O = ADP + phosphate + H(+). Its function is as follows. Might play a role in ribosome assembly or function; this is missing the first ABC transporter domain compared to paralogs. This chain is ATP-binding protein Uup-like (uup-B), found in Haemophilus influenzae (strain ATCC 51907 / DSM 11121 / KW20 / Rd).